The sequence spans 484 residues: ATP-dependent rRNA helicase RRP3 (484 aa).

A compositionally biased stretch (polar residues) spans 1–10 (MAIVGSNSVS). The interval 1–61 (MAIVGSNSVS…SSQKSKNIVE (61 aa)) is disordered. Over residues 18–54 (RNDARDLAEKIKRNALKKQEQDKKQQLEEESKPESSQ) the composition is skewed to basic and acidic residues. A Q motif motif is present at residues 71-99 (STFSELKLVPELLEAIQQMKFSKPTPIQS). Residues 102–273 (IPHALEGKDI…RASLHNPVRV (172 aa)) enclose the Helicase ATP-binding domain. 115–122 (AQTGSGKT) contributes to the ATP binding site. The DEAD box signature appears at 221–224 (DEAD). The Helicase C-terminal domain maps to 300–444 (YLIHLLNEFV…KDPSPPKAML (145 aa)). The tract at residues 460-484 (RQTKEFHEKTRRGRRGKDDKDREEH) is disordered. Residues 475–484 (GKDDKDREEH) are compositionally biased toward basic and acidic residues.

The protein belongs to the DEAD box helicase family. DDX47/RRP3 subfamily. In terms of assembly, interacts with the SSU processome.

It localises to the nucleus. The enzyme catalyses ATP + H2O = ADP + phosphate + H(+). Functionally, ATP-dependent rRNA helicase required for pre-ribosomal RNA processing. Involved in the maturation of the 35S-pre-rRNA and to its cleavage to mature 18S rRNA. The chain is ATP-dependent rRNA helicase RRP3 from Scheffersomyces stipitis (strain ATCC 58785 / CBS 6054 / NBRC 10063 / NRRL Y-11545) (Yeast).